We begin with the raw amino-acid sequence, 336 residues long: Izumo sperm-egg fusion protein 1 (336 aa).

An N-terminal signal peptide occupies residues 1–16; sequence MTLPILLGWFLTLCSS. One can recognise an Ig-like C2-type domain in the interval 158 to 247; that stretch reads PPLDCGEHHL…LKDQKGTALS (90 aa). An intrachain disulfide couples Cys179 to Cys236. Residues 287–307 form a helical membrane-spanning segment; the sequence is SFLTVLILLTVLSITGSLIII.

The protein belongs to the Izumo family. Forms a complex with tmem81 and spaca6 on spermatocyte cell membrane. The complex binds to oocyte protein bncr. As to expression, expressed in sperm.

The protein resides in the cell membrane. It is found in the cytoplasmic vesicle. It localises to the secretory vesicle. The protein localises to the acrosome membrane. Its function is as follows. Essential sperm cell-surface protein required for fertilization by acting as a ligand for bncr receptor on egg. The interaction of the complex izumo1:spaca6:tmemt81 with bncr is a necessary adhesion event between sperm and egg that is required for fertilization. The sequence is that of Izumo sperm-egg fusion protein 1 from Danio rerio (Zebrafish).